The primary structure comprises 474 residues: Flotillin-like protein 3 (474 aa).

The S-palmitoyl cysteine moiety is linked to residue Cys-35. 2 coiled-coil regions span residues 235 to 255 and 305 to 325; these read ENQR…KKAA and QYET…KEAE.

This sequence belongs to the band 7/mec-2 family. Flotillin subfamily. In terms of processing, may be palmitoylated. In terms of tissue distribution, expressed in all plant organs. Primarily expressed in vascular tissues. No change in spatial expression in root upon inoculation. Expression limited to the nodule vascular tissue.

It localises to the cell membrane. The protein resides in the membrane. Its subcellular location is the caveola. In terms of biological role, may act as a scaffolding protein within caveolar membranes, functionally participating in formation of caveolae or caveolae-like vesicles. May be involved in nodule formation. This chain is Flotillin-like protein 3 (FLOT3), found in Medicago truncatula (Barrel medic).